The primary structure comprises 366 residues: Aminomethyltransferase (366 aa).

Belongs to the GcvT family. In terms of assembly, the glycine cleavage system is composed of four proteins: P, T, L and H.

It catalyses the reaction N(6)-[(R)-S(8)-aminomethyldihydrolipoyl]-L-lysyl-[protein] + (6S)-5,6,7,8-tetrahydrofolate = N(6)-[(R)-dihydrolipoyl]-L-lysyl-[protein] + (6R)-5,10-methylene-5,6,7,8-tetrahydrofolate + NH4(+). Functionally, the glycine cleavage system catalyzes the degradation of glycine. The chain is Aminomethyltransferase from Thermosynechococcus vestitus (strain NIES-2133 / IAM M-273 / BP-1).